We begin with the raw amino-acid sequence, 120 residues long: Chaperonin GroEL (120 aa).

23–27 (DGTTT) is an ATP binding site.

Belongs to the chaperonin (HSP60) family. As to quaternary structure, forms a cylinder of 14 subunits composed of two heptameric rings stacked back-to-back. Interacts with the co-chaperonin GroES.

It is found in the cytoplasm. The enzyme catalyses ATP + H2O + a folded polypeptide = ADP + phosphate + an unfolded polypeptide.. Functionally, together with its co-chaperonin GroES, plays an essential role in assisting protein folding. The GroEL-GroES system forms a nano-cage that allows encapsulation of the non-native substrate proteins and provides a physical environment optimized to promote and accelerate protein folding. This is Chaperonin GroEL from Mycobacterium intracellulare.